The following is a 72-amino-acid chain: UPF0154 protein LBA1278 (72 aa).

A helical membrane pass occupies residues 3-23 (LGLAIFLIIIALLVGATAGFY).

Belongs to the UPF0154 family.

Its subcellular location is the cell membrane. The protein is UPF0154 protein LBA1278 of Lactobacillus acidophilus (strain ATCC 700396 / NCK56 / N2 / NCFM).